Here is a 359-residue protein sequence, read N- to C-terminus: Alanine racemase (359 aa).

Lys-34 (proton acceptor; specific for D-alanine) is an active-site residue. Lys-34 is subject to N6-(pyridoxal phosphate)lysine. Arg-129 lines the substrate pocket. Tyr-255 acts as the Proton acceptor; specific for L-alanine in catalysis. A substrate-binding site is contributed by Met-303.

The protein belongs to the alanine racemase family. Pyridoxal 5'-phosphate is required as a cofactor.

The enzyme catalyses L-alanine = D-alanine. It functions in the pathway amino-acid biosynthesis; D-alanine biosynthesis; D-alanine from L-alanine: step 1/1. Functionally, catalyzes the interconversion of L-alanine and D-alanine. May also act on other amino acids. This chain is Alanine racemase (alr), found in Shigella dysenteriae serotype 1 (strain Sd197).